The chain runs to 71 residues: MLLETDASRNKPSSYIPLCGSDNSCGGLWCPRKGGKYSCISMTCDIQEDCPKLVRCKDSPGPYCMEGFCTC.

Intrachain disulfides connect Cys44-Cys64, Cys50-Cys69, and Cys56-Cys71.

The protein belongs to the DEFL family.

This chain is Defensin-like protein 292, found in Arabidopsis thaliana (Mouse-ear cress).